The following is a 402-amino-acid chain: Triose phosphate/phosphate translocator, chloroplastic (402 aa).

Residues 1-72 constitute a chloroplast transit peptide; that stretch reads MESRVLSRAT…KGASLLRPCP (72 aa). The Chloroplast intermembrane portion of the chain corresponds to 73–96; that stretch reads ATAGGNDSAGEEKVAPVGFFSRYP. A helical membrane pass occupies residues 97 to 117; that stretch reads ALTTGFFFFTWYFLNVIFNIL. Residues 118–129 lie on the Lumenal side of the membrane; sequence NKKIYNYFPYPY. A helical transmembrane segment spans residues 130-150; sequence FVSVIHLAVGVVYCLVSWTVG. Over 151–207 the chain is Chloroplast intermembrane; it reads LPKRAPIDGNLLKLLIPVAVCHALGHVTSNVSFAAVAVSFTHTVKALEPFFNAAASQ. A helical transmembrane segment spans residues 208 to 228; the sequence is FILGQSIPITLWLSLAPVVIG. The Lumenal portion of the chain corresponds to 229-272; the sequence is VSMASLTELSFNWLGFISAMISNISFTYRSIYSKKAMTDMDSTN. The helical transmembrane segment at 273-292 threads the bilayer; sequence IYAYISIIALIVCIPPALII. Topologically, residues 293-370 are chloroplast intermembrane; that stretch reads EGPTLLKTGF…IIFGNKISTQ (78 aa). The helical transmembrane segment at 371–391 threads the bilayer; that stretch reads TGIGTGIAIAGVALYSFIKAQ. Residues 392–402 lie on the Lumenal side of the membrane; the sequence is IEEEKRQAKAA.

It belongs to the TPT transporter family. TPT (TC 2.A.7.9) subfamily. In terms of assembly, homodimer.

It is found in the plastid. It localises to the chloroplast membrane. Functionally, mediates the export of fixed carbons from the chloroplasts into the cytosol in the form of triose phosphates. This is Triose phosphate/phosphate translocator, chloroplastic from Pisum sativum (Garden pea).